We begin with the raw amino-acid sequence, 367 residues long: GTPase Obg (367 aa).

An Obg domain is found at 1 to 158 (MFIDNVELTV…VQIRLELKLI (158 aa)). Positions 159–358 (ADVGLVGFPN…LKYALYDLVK (200 aa)) constitute an OBG-type G domain. Residues 165-172 (GFPNVGKS), 190-194 (FTTLT), 212-215 (DIPG), 280-283 (TKID), and 339-341 (SAV) each bind GTP. Positions 172 and 192 each coordinate Mg(2+).

This sequence belongs to the TRAFAC class OBG-HflX-like GTPase superfamily. OBG GTPase family. As to quaternary structure, monomer. Mg(2+) serves as cofactor.

The protein localises to the cytoplasm. Its function is as follows. An essential GTPase which binds GTP, GDP and possibly (p)ppGpp with moderate affinity, with high nucleotide exchange rates and a fairly low GTP hydrolysis rate. Plays a role in control of the cell cycle, stress response, ribosome biogenesis and in those bacteria that undergo differentiation, in morphogenesis control. The polypeptide is GTPase Obg (Nitratiruptor sp. (strain SB155-2)).